The chain runs to 370 residues: Quinolinate synthase (370 aa).

Iminosuccinate-binding residues include histidine 62 and serine 83. [4Fe-4S] cluster is bound at residue cysteine 128. Iminosuccinate contacts are provided by residues 154 to 156 (YAN) and serine 171. Cysteine 215 is a binding site for [4Fe-4S] cluster. Residues 241 to 243 (HPE) and threonine 258 contribute to the iminosuccinate site. Cysteine 312 serves as a coordination point for [4Fe-4S] cluster.

This sequence belongs to the quinolinate synthase family. Type 1 subfamily. [4Fe-4S] cluster is required as a cofactor.

Its subcellular location is the cytoplasm. The enzyme catalyses iminosuccinate + dihydroxyacetone phosphate = quinolinate + phosphate + 2 H2O + H(+). Its pathway is cofactor biosynthesis; NAD(+) biosynthesis; quinolinate from iminoaspartate: step 1/1. In terms of biological role, catalyzes the condensation of iminoaspartate with dihydroxyacetone phosphate to form quinolinate. The chain is Quinolinate synthase from Neisseria meningitidis serogroup C (strain 053442).